The following is a 332-amino-acid chain: 2-oxoglutarate-dependent dioxygenase FG08081 (332 aa).

One can recognise a Fe2OG dioxygenase domain in the interval 176-280; the sequence is RSKSTLYFLH…RYSISYFLRA (105 aa). 3 residues coordinate Fe cation: H201, D203, and H258. R271 serves as a coordination point for 2-oxoglutarate.

Belongs to the iron/ascorbate-dependent oxidoreductase family. Requires Fe(2+) as cofactor.

Its pathway is mycotoxin biosynthesis. In terms of biological role, 2-oxoglutarate-dependent dioxygenase; part of the gene cluster that mediates the biosynthesis of butenolide, a mycotoxin that shows antibiotic activity but does not seem to play a major role in the spread of head blight in wheat. Butenolide is derived from glutamic acid via a 4-acetamido-2-butenoic acid intermediate. The predicted function of the NADH:flavin oxidoreductase FG08077, the cytochrome P450 monooxygenase FG08079, the decarboxylase FG08083, and the putative acetyltransferase FG08082 are consistent with this pathway, however, the respective activities of the butelonide biosynthesis cluster enzymes have still to be experimentally determined. The sequence is that of 2-oxoglutarate-dependent dioxygenase FG08081 from Gibberella zeae (strain ATCC MYA-4620 / CBS 123657 / FGSC 9075 / NRRL 31084 / PH-1) (Wheat head blight fungus).